Consider the following 255-residue polypeptide: uncharacterized protein (255 aa).

[4Fe-4S] cluster is bound by residues Cys122 and Cys160.

Homodimer. Requires [4Fe-4S] cluster as cofactor.

This is an uncharacterized protein from Escherichia coli (strain K12).